The chain runs to 284 residues: Bifunctional protein FolD (284 aa).

NADP(+) is bound by residues 165–167, S190, and I231; that span reads GRS.

Belongs to the tetrahydrofolate dehydrogenase/cyclohydrolase family. Homodimer.

The catalysed reaction is (6R)-5,10-methylene-5,6,7,8-tetrahydrofolate + NADP(+) = (6R)-5,10-methenyltetrahydrofolate + NADPH. The enzyme catalyses (6R)-5,10-methenyltetrahydrofolate + H2O = (6R)-10-formyltetrahydrofolate + H(+). The protein operates within one-carbon metabolism; tetrahydrofolate interconversion. In terms of biological role, catalyzes the oxidation of 5,10-methylenetetrahydrofolate to 5,10-methenyltetrahydrofolate and then the hydrolysis of 5,10-methenyltetrahydrofolate to 10-formyltetrahydrofolate. This chain is Bifunctional protein FolD, found in Streptococcus thermophilus (strain ATCC BAA-250 / LMG 18311).